The sequence spans 503 residues: Ribose import ATP-binding protein RbsA 1 (503 aa).

ABC transporter domains are found at residues 5 to 241 (IALE…VGRA) and 253 to 495 (IGQP…AGIE). 37 to 44 (GENGAGKS) is a binding site for ATP.

The protein belongs to the ABC transporter superfamily. Ribose importer (TC 3.A.1.2.1) family. The complex is composed of an ATP-binding protein (RbsA), two transmembrane proteins (RbsC) and a solute-binding protein (RbsB).

It localises to the cell inner membrane. The enzyme catalyses D-ribose(out) + ATP + H2O = D-ribose(in) + ADP + phosphate + H(+). Part of the ABC transporter complex RbsABC involved in ribose import. Responsible for energy coupling to the transport system. The sequence is that of Ribose import ATP-binding protein RbsA 1 from Rhizobium meliloti (strain 1021) (Ensifer meliloti).